Reading from the N-terminus, the 70-residue chain is Testis-expressed protein 53 (70 aa).

Expressed in Testis.

This Homo sapiens (Human) protein is Testis-expressed protein 53.